We begin with the raw amino-acid sequence, 586 residues long: MVVGKIIKISGPVVVAEGMKGSQMFEVVKVGNEGLTGEIIQLTEDEAIIQVYEETAGIKPGEGVEGTGAPLSVELGPGMLKAMYDGIQRPLNEIENATDSIYIPRGVSVPSISREIKWDFEPTAAAGDEVITGDVIGTVQETASIVHKIMIPFGVSGKIKEIKAGSFTVEETVAVVETAEGEKEIMMMQKWPVRKPRPSKGKQAPVIPLITGQRVEDTFFGLAKGGASAIPGPFGSGKTVTQHQLAKWSDVDVVVYIGCGERGNEMTEVIEEFPHLDDIKTGNKLMDRTVLIANTSNMPVAAREASVYTGITIAEYFRDQGLGVLLTADSTSRWAEAMREISGRLEEMPGEEGYPAYLSSKLAQFYERAGRVECLGSENKQGFVCIVGAVSPPGGDFSEPVTSNTLRIVKVFWALDANLARRRHFPAINWLTSYSLYIDDIAGWWQQNTAADWRSLRDEAMSLLQKEAELQEIVQLVGPDALPDRERVILEIARMLREDFLQQDAYHEVDSYCSPLKQYNMLKIIMTFYKKGLDAVAKGADPAGISAVTVKGDIARMKYLTDDEFINTKVPEIINKMESELGALIK.

232 to 239 (GPFGSGKT) serves as a coordination point for ATP.

The protein belongs to the ATPase alpha/beta chains family. In terms of assembly, has multiple subunits with at least A(3), B(3), C, D, E, F, H, I and proteolipid K(x).

The protein resides in the cell membrane. It carries out the reaction ATP + H2O + 4 H(+)(in) = ADP + phosphate + 5 H(+)(out). Component of the A-type ATP synthase that produces ATP from ADP in the presence of a proton gradient across the membrane. The A chain is the catalytic subunit. The chain is A-type ATP synthase subunit A from Methanococcus maripaludis (strain DSM 14266 / JCM 13030 / NBRC 101832 / S2 / LL).